Consider the following 336-residue polypeptide: Potassium channel subfamily K member 1 (336 aa).

At 1–20 the chain is on the cytoplasmic side; it reads MLQSLAGSSCVRLVERHRSA. The chain crosses the membrane as a helical span at residues 21–41; the sequence is RCFGFLVLGYLLYLVFGAVVF. Residues 42–103 are Extracellular-facing; that stretch reads SSVELPYEDL…SNASGNWNWD (62 aa). The N-linked (GlcNAc...) asparagine glycan is linked to Asn95. Residues 104-116 constitute an intramembrane region (helical); the sequence is FTSALFFASTVLS. Residues 117–122 lie within the membrane without spanning it; the sequence is TTGYGH. The segment at 117 to 122 is selectivity filter 1; the sequence is TTGYGH. Topologically, residues 123-132 are extracellular; the sequence is TVPLSDGGKA. The helical transmembrane segment at 133-156 threads the bilayer; sequence FCIIYSVIGIPFTLLFLTAVVQRI. The Cytoplasmic segment spans residues 157–181; that stretch reads TVHVTRRPVLYFHIRWGFSKQVVAI. The chain crosses the membrane as a helical span at residues 182–202; sequence VHAVLLGFVTVSCFFFIPAAV. Residues 203–211 are Extracellular-facing; sequence FSVLEDDWN. Positions 212 to 224 form an intramembrane region, helical; sequence FLESFYFCFISLS. Residues 225-230 are selectivity filter 2; that stretch reads TIGLGD. An intramembrane segment occupies 225 to 231; sequence TIGLGDY. At 232-243 the chain is on the extracellular side; that stretch reads VPGEGYNQKFRE. Residues 244 to 267 traverse the membrane as a helical segment; sequence LYKIGITCYLLLGLIAMLVVLETF. At 268-336 the chain is on the cytoplasmic side; the sequence is CELHELKKFR…SACMDGPANH (69 aa). A Glycyl lysine isopeptide (Lys-Gly) (interchain with G-Cter in SUMO) cross-link involves residue Lys274. Residues 293 to 299 form an important for intracellular retention in recycling endosomes region; the sequence is IIEHDQL. The interval 315–336 is disordered; that stretch reads QKQNEPFVATQSSACMDGPANH. The residue at position 326 (Ser326) is a Phosphoserine.

The protein belongs to the two pore domain potassium channel (TC 1.A.1.8) family. In terms of assembly, homodimer; disulfide-linked. Heterodimer with KCNK2; disulfide-linked. In astrocytes, forms mostly heterodimeric potassium channels with KCNK2, with only a minor proportion of functional channels containing homodimeric KCNK1. Interacts with KCNK3 and KCNK9, forming functional heterodimeric channels. Interacts with GNG4. Identified in a complex with PSD and ARF6; interacts only with PSD that is bound to ARF6. Interacts with UBE2I. Sumoylation is controversial. Sumoylated by UBE2I. Not sumoylated when expressed in xenopus oocytes or mammalian cells. Sumoylation inactivates the channel, but does not interfere with expression at the cell membrane. Sumoylation of a single subunit is sufficient to silence the dimeric channel. Sumoylation of KCNK1 is sufficient to silence heterodimeric channels formed by KCNK1 and KCNK3 or KCNK9. Desumoylated by SENP1; this activates the channel. Desumoylated by SENP1; this strongly increases halothane-mediated activation of heterodimeric channels formed with KCNK9. SENP1 treatment has no effect.

The protein localises to the cell membrane. The protein resides in the recycling endosome. Its subcellular location is the synaptic cell membrane. It localises to the cytoplasmic vesicle. It is found in the perikaryon. The protein localises to the cell projection. The protein resides in the dendrite. Its subcellular location is the apical cell membrane. It carries out the reaction K(+)(in) = K(+)(out). The enzyme catalyses NH4(+)(in) = NH4(+)(out). It catalyses the reaction Na(+)(in) = Na(+)(out). The catalysed reaction is Rb(+)(in) = Rb(+)(out). It carries out the reaction Cs(+)(in) = Cs(+)(out). The enzyme catalyses Li(+)(in) = Li(+)(out). It catalyses the reaction L-glutamate(out) = L-glutamate(in). The catalysed reaction is chloride(in) = chloride(out). Its function is as follows. Ion channel that contributes to passive transmembrane potassium transport and to the regulation of the resting membrane potential in brain astrocytes, but also in kidney and in other tissues. Forms dimeric channels through which potassium ions pass in accordance with their electrochemical gradient. The channel is selective for K(+) ions at physiological potassium concentrations and at neutral pH, but becomes permeable to Na(+) at subphysiological K(+) levels, and upon acidification of the extracellular medium. The homodimer has very low potassium channel activity, when expressed in heterologous systems, and can function as weakly inward rectifying potassium channel. Channel activity is modulated by activation of serotonin receptors. Heterodimeric channels containing KCNK1 and KCNK2 have much higher activity, and may represent the predominant form in astrocytes. Heterodimeric channels containing KCNK1 and KCNK3 or KCNK9 have much higher activity. Heterodimeric channels formed by KCNK1 and KCNK9 may contribute to halothane-sensitive currents. Mediates outward rectifying potassium currents in dentate gyrus granule cells and contributes to the regulation of their resting membrane potential. Contributes to the regulation of action potential firing in dentate gyrus granule cells and down-regulates their intrinsic excitability. In astrocytes, the heterodimer formed by KCNK1 and KCNK2 is required for rapid glutamate release in response to activation of G-protein coupled receptors, such as F2R and CNR1. Required for normal ion and water transport in the kidney. Contributes to the regulation of the resting membrane potential of pancreatic beta cells. The low channel activity of homodimeric KCNK1 may be due to sumoylation. The low channel activity may be due to rapid internalization from the cell membrane and retention in recycling endosomes. Permeable to monovalent cations with ion selectivity for K(+) &gt; Rb(+) &gt;&gt; NH4(+) &gt;&gt; Cs(+) = Na(+) = Li(+). This chain is Potassium channel subfamily K member 1, found in Pongo abelii (Sumatran orangutan).